Here is a 272-residue protein sequence, read N- to C-terminus: Ethanolamine ammonia-lyase small subunit (272 aa).

Positions 161, 182, and 211 each coordinate adenosylcob(III)alamin.

Belongs to the EutC family. In terms of assembly, the basic unit is a heterodimer which dimerizes to form tetramers. The heterotetramers trimerize; 6 large subunits form a core ring with 6 small subunits projecting outwards. Adenosylcob(III)alamin serves as cofactor.

Its subcellular location is the bacterial microcompartment. It catalyses the reaction ethanolamine = acetaldehyde + NH4(+). The protein operates within amine and polyamine degradation; ethanolamine degradation. In terms of biological role, catalyzes the deamination of various vicinal amino-alcohols to oxo compounds. Allows this organism to utilize ethanolamine as the sole source of nitrogen and carbon in the presence of external vitamin B12. The sequence is that of Ethanolamine ammonia-lyase small subunit from Xanthomonas campestris pv. campestris (strain ATCC 33913 / DSM 3586 / NCPPB 528 / LMG 568 / P 25).